The sequence spans 99 residues: Secreted RxLR effector protein 94 (99 aa).

The RxLR-dEER signature appears at 35 to 55; the sequence is RQLRQSANPSKAWHQWKSETR.

Belongs to the RxLR effector family.

Its subcellular location is the secreted. The protein localises to the host nucleus. It is found in the host cytoplasm. In terms of biological role, secreted effector that completely suppresses the host cell death induced by cell death-inducing proteins. The protein is Secreted RxLR effector protein 94 of Plasmopara viticola (Downy mildew of grapevine).